A 317-amino-acid chain; its full sequence is Transaldolase (317 aa).

Lys126 functions as the Schiff-base intermediate with substrate in the catalytic mechanism.

The protein belongs to the transaldolase family. Type 1 subfamily. As to quaternary structure, homodimer.

Its subcellular location is the cytoplasm. It carries out the reaction D-sedoheptulose 7-phosphate + D-glyceraldehyde 3-phosphate = D-erythrose 4-phosphate + beta-D-fructose 6-phosphate. The protein operates within carbohydrate degradation; pentose phosphate pathway; D-glyceraldehyde 3-phosphate and beta-D-fructose 6-phosphate from D-ribose 5-phosphate and D-xylulose 5-phosphate (non-oxidative stage): step 2/3. In terms of biological role, transaldolase is important for the balance of metabolites in the pentose-phosphate pathway. This chain is Transaldolase, found in Burkholderia pseudomallei (strain K96243).